The primary structure comprises 87 residues: MKTLILLSALVLLALQVQADPIQEAEEETKTEEQPADEDQDVSVSFEGPEASAVQDLRVRRTLQCSCRRVCRNTCSCIRLSRSTYAS.

An N-terminal signal peptide occupies residues 1–19; the sequence is MKTLILLSALVLLALQVQA. The propeptide occupies 20–56; sequence DPIQEAEEETKTEEQPADEDQDVSVSFEGPEASAVQD. Residues 23–41 are compositionally biased toward acidic residues; the sequence is QEAEEETKTEEQPADEDQD. Residues 23–43 form a disordered region; that stretch reads QEAEEETKTEEQPADEDQDVS.

The protein belongs to the alpha-defensin family. Antiparallel homodimer; disulfide-linked. Specifically expressed in small intestine (jejunum and ileum). Probably expressed by Paneth cells at the base of intestinal crypts. Coexpressed with MMP7 in small intestine.

The protein resides in the secreted. Its function is as follows. Intestinal defense peptide. Has potent antibacterial activity against Gram-negative bacteria E.coli O157:H7, S.typhimurium DT104, and K.pneumoniae; and against Gram-positive bacteria S.aureus, methicillin-resistant S.aureus and L.monocytogenes. Remains active in the presence of NaCl and Mg(2+). Probably functions by disrupting bacterial membrane integrity. However, does not show cytotoxic activity towards human intestinal cells. In Rattus norvegicus (Rat), this protein is Defensin alpha-like protein 1.